A 799-amino-acid polypeptide reads, in one-letter code: Ribonucleoside-diphosphate reductase large subunit (799 aa).

Substrate contacts are provided by residues Thr192, 207–208, Gly238, 408–412, and 612–616; these read SC, NLCAE, and PTAGT. A disulfide bridge links Cys208 with Cys424. The Proton acceptor role is filled by Asn408. Cys410 (cysteine radical intermediate) is an active-site residue. The active-site Proton acceptor is the Glu412. Residues 765 to 799 form a disordered region; the sequence is PDSGDGVGGYKGGDEEPRSPEHAQCESPDRCLSCQ. Over residues 776-793 the composition is skewed to basic and acidic residues; it reads GGDEEPRSPEHAQCESPD.

It belongs to the ribonucleoside diphosphate reductase large chain family. In terms of assembly, heterotetramer composed of a homodimer of the large subunit (R1) and a homodimer of the small subunit (R2). Larger multisubunit protein complex are also active, composed of (R1)n(R2)n.

It catalyses the reaction a 2'-deoxyribonucleoside 5'-diphosphate + [thioredoxin]-disulfide + H2O = a ribonucleoside 5'-diphosphate + [thioredoxin]-dithiol. Functionally, ribonucleoside-diphosphate reductase holoenzyme provides the precursors necessary for viral DNA synthesis. Allows virus growth in non-dividing cells, as well as reactivation from latency in infected hosts. Catalyzes the biosynthesis of deoxyribonucleotides from the corresponding ribonucleotides. This is Ribonucleoside-diphosphate reductase large subunit from Equine herpesvirus 2 (strain 86/87) (EHV-2).